The chain runs to 168 residues: Large ribosomal subunit protein uL24 (168 aa).

Residues Leu112–Asn168 form a disordered region.

This sequence belongs to the universal ribosomal protein uL24 family. As to quaternary structure, part of the 50S ribosomal subunit.

Functionally, one of two assembly initiator proteins, it binds directly to the 5'-end of the 23S rRNA, where it nucleates assembly of the 50S subunit. Located at the polypeptide exit tunnel on the outside of the subunit. The protein is Large ribosomal subunit protein uL24 of Nitrosopumilus maritimus (strain SCM1).